An 81-amino-acid chain; its full sequence is Putative defensin-like protein 56 (81 aa).

The signal sequence occupies residues 1-23; sequence MNITKAYVIFFLVVILTNSLSNS. Intrachain disulfides connect C46–C80, C50–C73, C59–C78, and C63–C79.

It belongs to the DEFL family.

It localises to the secreted. This is Putative defensin-like protein 56 from Arabidopsis thaliana (Mouse-ear cress).